Reading from the N-terminus, the 406-residue chain is Nicotinate phosphoribosyltransferase (406 aa).

At histidine 227 the chain carries Phosphohistidine; by autocatalysis.

This sequence belongs to the NAPRTase family. In terms of processing, transiently phosphorylated on a His residue during the reaction cycle. Phosphorylation strongly increases the affinity for substrates and increases the rate of nicotinate D-ribonucleotide production. Dephosphorylation regenerates the low-affinity form of the enzyme, leading to product release.

The catalysed reaction is nicotinate + 5-phospho-alpha-D-ribose 1-diphosphate + ATP + H2O = nicotinate beta-D-ribonucleotide + ADP + phosphate + diphosphate. The protein operates within cofactor biosynthesis; NAD(+) biosynthesis; nicotinate D-ribonucleotide from nicotinate: step 1/1. Catalyzes the synthesis of beta-nicotinate D-ribonucleotide from nicotinate and 5-phospho-D-ribose 1-phosphate at the expense of ATP. This chain is Nicotinate phosphoribosyltransferase, found in Methanosarcina mazei (strain ATCC BAA-159 / DSM 3647 / Goe1 / Go1 / JCM 11833 / OCM 88) (Methanosarcina frisia).